The sequence spans 410 residues: Methylamine dehydrogenase heavy chain (410 aa).

Residues 1-35 (MTHAYTKVRQALCYGSATLGAAALAALIAAGSAAA) form the signal peptide.

Belongs to the aromatic amine dehydrogenase heavy chain family. As to quaternary structure, tetramer of two light and two heavy chains.

The protein localises to the periplasm. The enzyme catalyses 2 oxidized [amicyanin] + methylamine + H2O = 2 reduced [amicyanin] + formaldehyde + NH4(+) + 2 H(+). In terms of biological role, methylamine dehydrogenase carries out the oxidation of methylamine. Electrons are passed from methylamine dehydrogenase to amicyanin. This chain is Methylamine dehydrogenase heavy chain (mauB), found in Methylorubrum extorquens (strain ATCC 14718 / DSM 1338 / JCM 2805 / NCIMB 9133 / AM1) (Methylobacterium extorquens).